The chain runs to 189 residues: NADH-quinone oxidoreductase subunit B (189 aa).

[4Fe-4S] cluster is bound by residues cysteine 39, cysteine 40, cysteine 104, and cysteine 135.

The protein belongs to the complex I 20 kDa subunit family. In terms of assembly, NDH-1 is composed of 14 different subunits. Subunits NuoB, C, D, E, F, and G constitute the peripheral sector of the complex. Requires [4Fe-4S] cluster as cofactor.

The protein localises to the cell inner membrane. The catalysed reaction is a quinone + NADH + 5 H(+)(in) = a quinol + NAD(+) + 4 H(+)(out). In terms of biological role, NDH-1 shuttles electrons from NADH, via FMN and iron-sulfur (Fe-S) centers, to quinones in the respiratory chain. The immediate electron acceptor for the enzyme in this species is believed to be a menaquinone. Couples the redox reaction to proton translocation (for every two electrons transferred, four hydrogen ions are translocated across the cytoplasmic membrane), and thus conserves the redox energy in a proton gradient. In Chlorobaculum parvum (strain DSM 263 / NCIMB 8327) (Chlorobium vibrioforme subsp. thiosulfatophilum), this protein is NADH-quinone oxidoreductase subunit B.